The chain runs to 485 residues: MNEVMVIKEGWLQKRGEYIKTWRPRYFLLKSDGSFIGYKEKPDSTEHSLLPPLNNFSVAECQLMKTERPRPNTFVIRCLQWTTVIERTFHVDTPEEREEWIIAIQTVANGLKNQVPEDEEEEAMEVKYGSPSDVSSAEQMDVAMSKGRPKVTMNDFDYLKLLGKGTFGKVILVREKATGLYYAMKILRKEVIIAKDEVAHTLTESRVLQNTKHPFLTGLKYAFQTSDRLCFVMEYANGGELFFHLSRERVFTEDRARFYGAEIVSALEYLHSRNVVYRDIKLENLMLDKDGHVKITDFGLCKEGITDGATMRTFCGTPEYLAPEVLEDNDYGRAVDWWGLGVVMYEMMCGRLPFYNQDHERLFELILMEETRFPRTLSPEAKSLLAGLLKKDPKQRLGGGPDDAQEVMSHGFFASINWQDVTERKLSPPFKPQVTSEIDTRYFDDEFTAQSITLTPPDRYDNLDALESEQRPHFPQFSYSSSIRE.

Positions 5–109 constitute a PH domain; sequence MVIKEGWLQK…WIIAIQTVAN (105 aa). Residues Ser132 and Ser135 are each glycosylated (O-linked (GlcNAc) serine). In terms of domain architecture, Protein kinase spans 156–413; that stretch reads FDYLKLLGKG…AQEVMSHGFF (258 aa). ATP contacts are provided by residues 162 to 170 and Lys185; that span reads LGKGTFGKV. Asp279 serves as the catalytic Proton acceptor. Thr310 carries O-linked (GlcNAc) threonine glycosylation. A Phosphothreonine modification is found at Thr313. Thr317 is a glycosylation site (O-linked (GlcNAc) threonine). Residues 414-485 form the AGC-kinase C-terminal domain; that stretch reads ASINWQDVTE…QFSYSSSIRE (72 aa). The tract at residues 454-485 is disordered; that stretch reads LTPPDRYDNLDALESEQRPHFPQFSYSSSIRE. The segment covering 458–472 has biased composition (basic and acidic residues); it reads DRYDNLDALESEQRP. Ser478 is subject to Phosphoserine. A glycan (O-linked (GlcNAc) serine; alternate) is linked at Ser478.

This sequence belongs to the protein kinase superfamily. AGC Ser/Thr protein kinase family. RAC subfamily. Post-translationally, phosphorylation on Thr-313 and Ser-478 is required for full activity. Phosphorylation of the activation loop at Thr-313 by PDPK1/PDK1 is a prerequisite for full activation. Phosphorylation by mTORC2 at Ser-478 in response to growth factors plays a key role in AKT1 activation by facilitating subsequent phosphorylation of the activation loop by PDPK1/PDK1.

It carries out the reaction L-seryl-[protein] + ATP = O-phospho-L-seryl-[protein] + ADP + H(+). It catalyses the reaction L-threonyl-[protein] + ATP = O-phospho-L-threonyl-[protein] + ADP + H(+). With respect to regulation, two specific sites, one in the kinase domain (Thr-313) and the other in the C-terminal regulatory region (Ser-478), need to be phosphorylated for its full activation. Its function is as follows. Akt2-b is one of several closely related serine/threonine-protein kinases known as the AKT kinase, and which regulate many processes including metabolism, proliferation, cell survival, growth and angiogenesis. This is mediated through serine and/or threonine phosphorylation of a range of downstream substrates. Over 100 substrate candidates have been reported so far, but for most of them, no isoform specificity has been reported. May be involved in the inhibition of ciliogenesis. The chain is RAC-beta serine/threonine-protein kinase B (akt2-b) from Xenopus laevis (African clawed frog).